The primary structure comprises 187 residues: Orotate phosphoribosyltransferase (187 aa).

5-phospho-alpha-D-ribose 1-diphosphate-binding positions include Arg99, Lys100, Lys103, His105, and 125–133 (DDVITTGGS). Orotate contacts are provided by Thr129 and Arg157.

Belongs to the purine/pyrimidine phosphoribosyltransferase family. PyrE subfamily. As to quaternary structure, homodimer. The cofactor is Mg(2+).

The enzyme catalyses orotidine 5'-phosphate + diphosphate = orotate + 5-phospho-alpha-D-ribose 1-diphosphate. It functions in the pathway pyrimidine metabolism; UMP biosynthesis via de novo pathway; UMP from orotate: step 1/2. Functionally, catalyzes the transfer of a ribosyl phosphate group from 5-phosphoribose 1-diphosphate to orotate, leading to the formation of orotidine monophosphate (OMP). This is Orotate phosphoribosyltransferase from Leptospira borgpetersenii serovar Hardjo-bovis (strain JB197).